The chain runs to 118 residues: Large ribosomal subunit protein bL20 (118 aa).

Belongs to the bacterial ribosomal protein bL20 family.

Its function is as follows. Binds directly to 23S ribosomal RNA and is necessary for the in vitro assembly process of the 50S ribosomal subunit. It is not involved in the protein synthesizing functions of that subunit. The sequence is that of Large ribosomal subunit protein bL20 from Bacillus anthracis (strain CDC 684 / NRRL 3495).